The primary structure comprises 157 residues: Probable succinate transporter subunit YjjB (157 aa).

Helical transmembrane passes span 2 to 22, 55 to 75, 87 to 107, and 129 to 149; these read GIISFIFALAEDMLLAAIPAV, AGFNIEWATFLAALLVGSIGI, IFTVAAVIPMFPGISAYTAMI, and FLKASSIVGALSIGLSIPGLW.

Belongs to the ThrE exporter (TC 2.A.79) family. In terms of assembly, the transporter is composed of YjjB and YjjP.

The protein resides in the cell inner membrane. In terms of biological role, involved in succinate export with YjjP. Both proteins are required for export. This Klebsiella pneumoniae (strain 342) protein is Probable succinate transporter subunit YjjB.